Reading from the N-terminus, the 577-residue chain is F-box/TPR repeat protein pof3 (577 aa).

TPR repeat units lie at residues 6–39 (VKAIKEKTQQYLSKRKFEDALTFITKTIEQEPNP), 41–74 (IDLFELRAQVYEKSGQYSQAELDAKRMIHLNARN), and 76–108 (RGYLRLGKLLQLDGFDKKADQLYTQGLRMVHKM). One can recognise an F-box domain in the interval 138-180 (ILPREVLLCILQQLNFKSIVQCMQVCKHWRDCIKKEPSLFCCL).

As to quaternary structure, a part of the E3 ubiquitin ligase Skp1-Cullin-1-F-box (SCF) complex. Interacts with cul1, mcl1 and skp1.

The protein resides in the mitochondrion. Its subcellular location is the nucleus. In terms of biological role, has a role in substrate recognition in the Skp1-Cullin-1/Cdc53-F-box (SCF) ubiquitin ligase complex. Required for the maintenance of telomere length and transcriptional silencing at the telomere. Also required for chromosome segregation. The sequence is that of F-box/TPR repeat protein pof3 (pof3) from Schizosaccharomyces pombe (strain 972 / ATCC 24843) (Fission yeast).